Reading from the N-terminus, the 168-residue chain is Plastocyanin, chloroplastic (168 aa).

The N-terminal 70 residues, 1 to 70, are a transit peptide targeting the chloroplast; that stretch reads MASVAAAAVS…SSLLLVASAN (70 aa). The Plastocyanin-like domain maps to 71–168; it reads AATVKMGGDD…AGMKGVVTVS (98 aa). 4 residues coordinate Cu cation: H108, C153, H156, and M161.

This sequence belongs to the plastocyanin family. It depends on Cu(2+) as a cofactor.

It localises to the plastid. The protein localises to the chloroplast thylakoid membrane. Participates in electron transfer between P700 and the cytochrome b6-f complex in photosystem I. This Physcomitrium patens (Spreading-leaved earth moss) protein is Plastocyanin, chloroplastic (PETE).